A 107-amino-acid chain; its full sequence is Replication initiation control protein YabA (107 aa).

His-80, Cys-82, Cys-97, and Cys-100 together coordinate Zn(2+).

It belongs to the YabA family. As to quaternary structure, homotetramer. Interacts with both DnaA and DnaN, acting as a bridge between these two proteins. The cofactor is Zn(2+).

It is found in the cytoplasm. The protein localises to the nucleoid. Involved in control of chromosome replication initiation. Inhibits the cooperative binding of DnaA to the oriC region, thus negatively regulating initiation of chromosome replication. Inhibits the ability of DnaA-ATP to form a helix on DNA; does not disassemble preformed DnaA-DNA helices. Decreases the residence time of DnaA on the chromosome at its binding sites (oriC, replication forks and promoter-binding sites). Tethers DnaA to the replication machinery via the DNA polymerase beta sliding clamp subunit (dnaN). Associates with oriC and other DnaA targets on the chromosome in a DnaA-dependent manner. The chain is Replication initiation control protein YabA from Streptococcus gordonii (strain Challis / ATCC 35105 / BCRC 15272 / CH1 / DL1 / V288).